The primary structure comprises 138 residues: Type II secretion system protein I (138 aa).

Residues 1 to 6 (MKHQRG) constitute a propeptide, leader sequence. Tyr7 is subject to N-methyltyrosine. Residues 7–29 (YSLIEVIVAFALLALALTLLLGS) traverse the membrane as a helical segment.

The protein belongs to the GSP I family. In terms of assembly, type II secretion is composed of four main components: the outer membrane complex, the inner membrane complex, the cytoplasmic secretion ATPase and the periplasm-spanning pseudopilus. Interacts with core component XpsG. In terms of processing, cleaved by prepilin peptidase. Post-translationally, methylated by prepilin peptidase at the amino group of the N-terminal tyrosine once the leader sequence is cleaved by prepilin peptidase.

The protein resides in the cell inner membrane. Its function is as follows. Component of the type II secretion system required for the energy-dependent secretion of extracellular factors such as proteases and toxins from the periplasm. Part of the pseudopilus tip complex that is critical for the recognition and binding of secretion substrates. The protein is Type II secretion system protein I (xpsI) of Xanthomonas campestris pv. campestris (strain ATCC 33913 / DSM 3586 / NCPPB 528 / LMG 568 / P 25).